We begin with the raw amino-acid sequence, 186 residues long: Ribosome-recycling factor (186 aa).

Belongs to the RRF family.

Its subcellular location is the cytoplasm. Responsible for the release of ribosomes from messenger RNA at the termination of protein biosynthesis. May increase the efficiency of translation by recycling ribosomes from one round of translation to another. This chain is Ribosome-recycling factor, found in Bordetella parapertussis (strain 12822 / ATCC BAA-587 / NCTC 13253).